The sequence spans 666 residues: Protein translocase subunit SecA 2 (666 aa).

ATP-binding positions include Gln119, 137-141, and Asp546; that span reads GEGKS.

The protein belongs to the SecA family. In terms of assembly, monomer and homodimer. Part of the essential Sec protein translocation apparatus which comprises SecA, SecYEG and auxiliary proteins SecDF-YajC and YidC.

The protein resides in the cell inner membrane. Its subcellular location is the cytoplasm. The enzyme catalyses ATP + H2O + cellular proteinSide 1 = ADP + phosphate + cellular proteinSide 2.. Functionally, part of the Sec protein translocase complex. Interacts with the SecYEG preprotein conducting channel. Has a central role in coupling the hydrolysis of ATP to the transfer of proteins into and across the cell membrane, serving both as a receptor for the preprotein-SecB complex and as an ATP-driven molecular motor driving the stepwise translocation of polypeptide chains across the membrane. The chain is Protein translocase subunit SecA 2 from Nitrosospira multiformis (strain ATCC 25196 / NCIMB 11849 / C 71).